A 276-amino-acid chain; its full sequence is Putative translation initiation factor eIF-2B subunit 2-like (276 aa).

Belongs to the eIF-2B alpha/beta/delta subunits family. In terms of assembly, complex of two different subunits.

Catalyzes the exchange of initiation factor 2-bound GDP for GTP. This Pyrococcus furiosus (strain ATCC 43587 / DSM 3638 / JCM 8422 / Vc1) protein is Putative translation initiation factor eIF-2B subunit 2-like.